A 349-amino-acid chain; its full sequence is MDTIAARALTVMRACATLQEARIVLEANVMEILGIAINRYNGLTLRGVTMRPTSLAQRNEMFFMCLDMMLSAAGINVGPISPDYTQHMATIGVLATPEIPFTTEAANEIARVTGETSTWGPARQPYGFFLETEETFQPGRWFMRAAQAATAVVCGPDMIQVSLNAGARGDVQQIFQGRNDPMMIYLVWRRIENFAMAQGNSQQTQAGVTVSVGGVDMRAGRIIAWDGQAALHVRNPTQQNAMVQIQVVFYISMDKTLNQYPALTAEIFNVYSFRDHTWHGLRTAIRNRTTLPNMLPPIFPPNDRDSILTLLLLSTLADVYTVLRPEFAMHGVNPMPWPLTAAIARAAYV.

An N-linked (GlcNAc...) asparagine; by host glycan is attached at Asn-287.

It belongs to the orbivirus VP7 family. In terms of assembly, homotrimer that assemble in a complex of 260 capsomers on an inner scaffold composed of VP3.

It is found in the virion. In terms of biological role, the VP7 protein is one of the five proteins (with VP1, VP3, VP4, and VP6) which form the inner capsid of the virus. In Antilocapra americana (Pronghorn), this protein is Core protein VP7 (Segment-7).